We begin with the raw amino-acid sequence, 526 residues long: MGSSKSKPKDPSQRRHSLEPPDSTHHGGFPASQTPDETAAPDAHRNPSRSFGTVATEPKLFWGFNTSDTVTSPQRAGALAGGVTTFVALYDYESWTETDLSFKKGERLQIVNNTEGDWWLAHSLTTGQTGYIPSNYVAPSDSIQAEEWYFGKITRRESERLLLNPENPRGTFLVRKSETAKGAYCLSVSDFDNAKGPNVKHYKIYKLYSGGFYITSRTQFGSLQQLVAYYSKHADGLCHRLANVCPTSKPQTQGLAKDAWEIPRESLRLEAKLGQGCFGEVWMGTWNDTTRVAIKTLKPGTMSPEAFLQEAQVMKKLRHEKLVQLYAVVSEEPIYIVIEYMSKGSLLDFLKGEMGKYLRLPQLVDMAAQIASGMAYVERMNYVHRDLRAANILVGENLVCKVADFGLARLIEDNEYTARQGAKFPIKWTAPEAALYGRFTIKSDVWSFGILLTELTTKGRVPYPGMVNREVLDQVERGYRMPCPPECPESLHDLMCQCWRKDPEERPTFKYLQAQLLPACVLEVAE.

The tract at residues 1–52 (MGSSKSKPKDPSQRRHSLEPPDSTHHGGFPASQTPDETAAPDAHRNPSRSFG) is disordered. Glycine 2 carries the N-myristoyl glycine; by host lipid modification. The segment covering 7–25 (KPKDPSQRRHSLEPPDSTH) has biased composition (basic and acidic residues). 2 SH3 domains span residues 71 to 139 (TSPQ…YVAP) and 81 to 142 (GGVT…PSDS). The SH2 domain occupies 148–245 (WYFGKITRRE…GLCHRLANVC (98 aa)). Residues 267-517 (LRLEAKLGQG…TFKYLQAQLL (251 aa)) enclose the Protein kinase domain. Residues 273 to 281 (LGQGCFGEV) and lysine 295 each bind ATP. The active-site Proton acceptor is aspartate 386. Tyrosine 416 carries the post-translational modification Phosphotyrosine; by autocatalysis.

The protein belongs to the protein kinase superfamily. Tyr protein kinase family. SRC subfamily. As to quaternary structure, homodimer. The phosphorylated form is termed pp60v-src.

It carries out the reaction L-tyrosyl-[protein] + ATP = O-phospho-L-tyrosyl-[protein] + ADP + H(+). In terms of biological role, this phosphoprotein, required for both the initiation and the maintenance of neoplastic transformation, is a protein kinase that catalyzes the phosphorylation of tyrosine residues in vitro. The polypeptide is Tyrosine-protein kinase transforming protein Src (V-SRC) (Gallus gallus (Chicken)).